The sequence spans 48 residues: Fimbrial assembly protein, serogroup A1 (48 aa).

The protein is Fimbrial assembly protein, serogroup A1 (fimB) of Dichelobacter nodosus (Bacteroides nodosus).